A 156-amino-acid chain; its full sequence is 6,7-dimethyl-8-ribityllumazine synthase (156 aa).

5-amino-6-(D-ribitylamino)uracil-binding positions include Phe-23, 57–59 (AYE), and 81–83 (AII). 86-87 (ST) is a binding site for (2S)-2-hydroxy-3-oxobutyl phosphate. His-89 functions as the Proton donor in the catalytic mechanism. Phe-114 contributes to the 5-amino-6-(D-ribitylamino)uracil binding site. (2S)-2-hydroxy-3-oxobutyl phosphate is bound at residue Arg-128.

Belongs to the DMRL synthase family.

It catalyses the reaction (2S)-2-hydroxy-3-oxobutyl phosphate + 5-amino-6-(D-ribitylamino)uracil = 6,7-dimethyl-8-(1-D-ribityl)lumazine + phosphate + 2 H2O + H(+). The protein operates within cofactor biosynthesis; riboflavin biosynthesis; riboflavin from 2-hydroxy-3-oxobutyl phosphate and 5-amino-6-(D-ribitylamino)uracil: step 1/2. In terms of biological role, catalyzes the formation of 6,7-dimethyl-8-ribityllumazine by condensation of 5-amino-6-(D-ribitylamino)uracil with 3,4-dihydroxy-2-butanone 4-phosphate. This is the penultimate step in the biosynthesis of riboflavin. The chain is 6,7-dimethyl-8-ribityllumazine synthase from Campylobacter hominis (strain ATCC BAA-381 / DSM 21671 / CCUG 45161 / LMG 19568 / NCTC 13146 / CH001A).